A 153-amino-acid polypeptide reads, in one-letter code: UPF0178 protein Sfum_1097 (153 aa).

The protein belongs to the UPF0178 family.

The chain is UPF0178 protein Sfum_1097 from Syntrophobacter fumaroxidans (strain DSM 10017 / MPOB).